Reading from the N-terminus, the 540-residue chain is CTP synthase (540 aa).

The segment at 1 to 267 (MTKYIFVTGG…DQKVCDFLHL (267 aa)) is amidoligase domain. Residue S13 participates in CTP binding. S13 contacts UTP. 14-19 (SLGKGI) contacts ATP. Y54 is a binding site for L-glutamine. D71 is a binding site for ATP. The Mg(2+) site is built by D71 and E141. Residues 148-150 (DIE), 188-193 (KTKPTQ), and K224 contribute to the CTP site. UTP-binding positions include 188–193 (KTKPTQ) and K224. Positions 294-537 (TITLVGKYVE…IGAASGLPAQ (244 aa)) constitute a Glutamine amidotransferase type-1 domain. G356 serves as a coordination point for L-glutamine. C383 acts as the Nucleophile; for glutamine hydrolysis in catalysis. L-glutamine is bound by residues 384–387 (LGMQ), E407, and R465. Residues H510 and E512 contribute to the active site.

It belongs to the CTP synthase family. As to quaternary structure, homotetramer.

It carries out the reaction UTP + L-glutamine + ATP + H2O = CTP + L-glutamate + ADP + phosphate + 2 H(+). It catalyses the reaction L-glutamine + H2O = L-glutamate + NH4(+). The enzyme catalyses UTP + NH4(+) + ATP = CTP + ADP + phosphate + 2 H(+). The protein operates within pyrimidine metabolism; CTP biosynthesis via de novo pathway; CTP from UDP: step 2/2. With respect to regulation, allosterically activated by GTP, when glutamine is the substrate; GTP has no effect on the reaction when ammonia is the substrate. The allosteric effector GTP functions by stabilizing the protein conformation that binds the tetrahedral intermediate(s) formed during glutamine hydrolysis. Inhibited by the product CTP, via allosteric rather than competitive inhibition. Functionally, catalyzes the ATP-dependent amination of UTP to CTP with either L-glutamine or ammonia as the source of nitrogen. Regulates intracellular CTP levels through interactions with the four ribonucleotide triphosphates. In Lactobacillus johnsonii (strain CNCM I-12250 / La1 / NCC 533), this protein is CTP synthase.